Reading from the N-terminus, the 645-residue chain is Threonine--tRNA ligase (645 aa).

The TGS domain maps to 1 to 61 (MPAITLPDGS…SSDASVKFIT (61 aa)). Positions 243–536 (DHRRIGREMD…LIEQYAGKFP (294 aa)) are catalytic. Residues cysteine 336, histidine 387, and histidine 513 each coordinate Zn(2+).

The protein belongs to the class-II aminoacyl-tRNA synthetase family. Homodimer. Requires Zn(2+) as cofactor.

The protein localises to the cytoplasm. It catalyses the reaction tRNA(Thr) + L-threonine + ATP = L-threonyl-tRNA(Thr) + AMP + diphosphate + H(+). Functionally, catalyzes the attachment of threonine to tRNA(Thr) in a two-step reaction: L-threonine is first activated by ATP to form Thr-AMP and then transferred to the acceptor end of tRNA(Thr). Also edits incorrectly charged L-seryl-tRNA(Thr). This is Threonine--tRNA ligase from Gluconobacter oxydans (strain 621H) (Gluconobacter suboxydans).